The primary structure comprises 549 residues: MSRRQTWSLLLIAFGLFYLVPLSNHGLWIPDETRYAQISQAMLLGGDWVSPHFLGLRYFEKPVAGYWMIALGQAVFGENLFGVRIASVVATALSVLLAYLLARRLWRDPRTSLACALLYASFGLIAGQSGYANLDPQFTFWVNLSLVALWYALDAGSRRARLLGWILLGLACGMGFLTKGFLAWLLPVLVALPYMLWQRRWRELLGYGALAVLAALLVCLPWALAVHAREADYWRFFFWHEHIRRFAGEDAQHSRPWWFYLPLLVVACLPWSGLLPSALRQAWHERRQAPVVFLALWLLLPLAFFSLSRGKLPTYIMPCLLPLALLMGHALVQRLRLGNSVALRGNGLLNLGLALLALAALAYLQLRKPVYQEEPFELFLVLLVIGAWAAAGLAQWRYPLRAWAAPLLASWVLIALLPAAMPNHVVQNKTPDLFVAEHLDELTGARHLLSNDLGAASALAWRLRRSDVTLYDTRGELKYGLSYPEHSQRSVPLADIRQWLWRARQDGSVAVLLRINSASDRYQLALLPGDGERYRNGNLVLAILPQVRP.

12 helical membrane-spanning segments follow: residues 9 to 29, 80 to 100, 112 to 132, 136 to 156, 166 to 186, 204 to 224, 256 to 276, 288 to 308, 312 to 332, 346 to 366, 376 to 396, and 402 to 422; these read LLLI…GLWI, LFGV…LAYL, SLAC…SGYA, PQFT…LDAG, ILLG…AWLL, LLGY…PWAL, PWWF…GLLP, QAPV…FSLS, LPTY…HALV, NGLL…YLQL, FELF…LAQW, and AWAA…AAMP.

This sequence belongs to the glycosyltransferase 83 family.

It is found in the cell inner membrane. It catalyses the reaction 4-amino-4-deoxy-alpha-L-arabinopyranosyl di-trans,octa-cis-undecaprenyl phosphate + lipid IVA = lipid IIA + di-trans,octa-cis-undecaprenyl phosphate.. It functions in the pathway lipopolysaccharide metabolism; 4-amino-4-deoxy-beta-L-arabinose-lipid A biosynthesis. In terms of biological role, catalyzes the transfer of the L-Ara4N moiety of the glycolipid undecaprenyl phosphate-alpha-L-Ara4N to lipid A. The modified arabinose is attached to lipid A and is required for resistance to polymyxin and cationic antimicrobial peptides. This Pseudomonas aeruginosa (strain UCBPP-PA14) protein is Undecaprenyl phosphate-alpha-4-amino-4-deoxy-L-arabinose arabinosyl transferase.